A 588-amino-acid polypeptide reads, in one-letter code: Pescadillo homolog (588 aa).

Positions 344 to 437 (PVSTLFSDFV…KLVPANLYLP (94 aa)) constitute a BRCT domain. Disordered stretches follow at residues 446-533 (SPWG…EAEE) and 559-588 (KKEEKVENLKKKKKQISKTKEKLTKLEGKK). Residues 460-493 (DAEEEGEDDEDEDSEEGSGAEVEENVDEDEDDEE) show a composition bias toward acidic residues. Basic and acidic residues-rich tracts occupy residues 510–519 (SDIKDTEVKS) and 576–588 (KTKEKLTKLEGKK). A coiled-coil region spans residues 512–588 (IKDTEVKSKN…EKLTKLEGKK (77 aa)).

The protein belongs to the pescadillo family. As to quaternary structure, component of the NOP7 complex, composed of ERB1, NOP7 and YTM1. The complex is held together by ERB1, which interacts with NOP7 via its N-terminal domain and with YTM1 via a high-affinity interaction between the seven-bladed beta-propeller domains of the 2 proteins. The NOP7 complex associates with the 66S pre-ribosome.

It localises to the nucleus. Its subcellular location is the nucleolus. The protein localises to the nucleoplasm. In terms of biological role, component of the NOP7 complex, which is required for maturation of the 25S and 5.8S ribosomal RNAs and formation of the 60S ribosome. In Vanderwaltozyma polyspora (strain ATCC 22028 / DSM 70294 / BCRC 21397 / CBS 2163 / NBRC 10782 / NRRL Y-8283 / UCD 57-17) (Kluyveromyces polysporus), this protein is Pescadillo homolog.